The sequence spans 245 residues: Cytochrome P450 CYP82H23 (245 aa).

It belongs to the cytochrome P450 family. The cofactor is heme.

Probable heme-thiolate monooxygenase. The sequence is that of Cytochrome P450 CYP82H23 from Panax ginseng (Korean ginseng).